The following is a 219-amino-acid chain: Claudin-20 (219 aa).

The Cytoplasmic portion of the chain corresponds to 1-7; the sequence is MASAGLQ. The chain crosses the membrane as a helical span at residues 8–28; sequence LLAFILALSGVSGVLTATLLP. Topologically, residues 29–81 are extracellular; sequence NWKVNVDVDSNIITAIVQLHGLWMDCTWYSTGMFSCALKHSILSLPIHVQAAR. Residues 82–102 traverse the membrane as a helical segment; the sequence is ATMVLACVLSALGICTSTVGM. At 103–118 the chain is on the cytoplasmic side; that stretch reads KCTRLGGDRETKSHAS. The helical transmembrane segment at 119–139 threads the bilayer; it reads FAGGVCFMSAGISSLISTVWY. Residues 140 to 160 lie on the Extracellular side of the membrane; that stretch reads TKEIIANFLDLTVPESNKHEP. The chain crosses the membrane as a helical span at residues 161-181; sequence GGAIYIGFISAMLLFISGMIF. Residues 182–219 lie on the Cytoplasmic side of the membrane; it reads CTSCIKRNPEARLDPPTQQPISNTQLENNSTHNLKDYV. Residues 193 to 219 form a disordered region; sequence RLDPPTQQPISNTQLENNSTHNLKDYV. Residues 200-213 are compositionally biased toward polar residues; the sequence is QPISNTQLENNSTH.

It belongs to the claudin family.

It localises to the cell junction. Its subcellular location is the tight junction. The protein resides in the cell membrane. Plays a major role in tight junction-specific obliteration of the intercellular space, through calcium-independent cell-adhesion activity. This is Claudin-20 (CLDN20) from Homo sapiens (Human).